We begin with the raw amino-acid sequence, 151 residues long: Sperm surface protein Sp17 (151 aa).

Disordered stretches follow at residues 56 to 115 and 127 to 151; these read DPAE…EKEE and GHIA…EENK. Over residues 62–98 the composition is skewed to basic and acidic residues; sequence SKVEDRFYNNHAFEEQEPPEKSDPKQEESQISGKEEE. The region spanning 114–143 is the IQ domain; sequence EEVAAVKIQAAFRGHIAREEAKKMKTNSLQ.

As to quaternary structure, homodimer. May interact with ROPN1. Testis and sperm specific.

Its subcellular location is the membrane. Its function is as follows. Sperm surface zona pellucida binding protein. Helps to bind spermatozoa to the zona pellucida with high affinity. Might function in binding zona pellucida and carbohydrates. The polypeptide is Sperm surface protein Sp17 (SPA17) (Homo sapiens (Human)).